Consider the following 343-residue polypeptide: Fructose-1,6-bisphosphatase class 1 (343 aa).

Mg(2+) is bound by residues glutamate 91, aspartate 113, isoleucine 115, and aspartate 116. Residues 116–119 (DGSS), asparagine 210, and lysine 276 contribute to the substrate site. Glutamate 282 is a Mg(2+) binding site.

Belongs to the FBPase class 1 family. As to quaternary structure, homotetramer. Mg(2+) serves as cofactor.

It localises to the cytoplasm. The enzyme catalyses beta-D-fructose 1,6-bisphosphate + H2O = beta-D-fructose 6-phosphate + phosphate. The protein operates within carbohydrate biosynthesis; gluconeogenesis. The chain is Fructose-1,6-bisphosphatase class 1 from Parvibaculum lavamentivorans (strain DS-1 / DSM 13023 / NCIMB 13966).